Here is a 258-residue protein sequence, read N- to C-terminus: Type III pantothenate kinase (258 aa).

Residue 6-13 (DIGNTNTV) participates in ATP binding. Substrate-binding positions include Tyr100 and 107–110 (GADR). Asp109 acts as the Proton acceptor in catalysis. K(+) is bound at residue Asp129. Thr132 provides a ligand contact to ATP. Substrate is bound at residue Thr185.

The protein belongs to the type III pantothenate kinase family. Homodimer. The cofactor is NH4(+). K(+) is required as a cofactor.

The protein resides in the cytoplasm. The catalysed reaction is (R)-pantothenate + ATP = (R)-4'-phosphopantothenate + ADP + H(+). It participates in cofactor biosynthesis; coenzyme A biosynthesis; CoA from (R)-pantothenate: step 1/5. Catalyzes the phosphorylation of pantothenate (Pan), the first step in CoA biosynthesis. In Syntrophobacter fumaroxidans (strain DSM 10017 / MPOB), this protein is Type III pantothenate kinase.